The primary structure comprises 221 residues: Ribosomal RNA small subunit methyltransferase Nep1 (221 aa).

Residues glycine 174, glycine 179, and 196 to 201 (IGNVSL) contribute to the S-adenosyl-L-methionine site.

This sequence belongs to the class IV-like SAM-binding methyltransferase superfamily. RNA methyltransferase NEP1 family. As to quaternary structure, homodimer.

It carries out the reaction a pseudouridine in rRNA + S-adenosyl-L-methionine = an N(1)-methylpseudouridine in rRNA + S-adenosyl-L-homocysteine + H(+). Functionally, methyltransferase involved in ribosomal biogenesis. Specifically catalyzes the N1-methylation of the pseudouridine corresponding to position 914 in M.jannaschii 16S rRNA. This chain is Ribosomal RNA small subunit methyltransferase Nep1, found in Pyrobaculum calidifontis (strain DSM 21063 / JCM 11548 / VA1).